The primary structure comprises 806 residues: Minor extracellular protease Vpr (806 aa).

A signal peptide spans Met-1–Ala-28. Positions Ala-29–Gln-160 are excised as a propeptide. The Inhibitor I9 domain maps to Thr-57–Thr-142. The 440-residue stretch at Ser-158 to Asp-597 folds into the Peptidase S8 domain. Active-site charge relay system residues include Asp-189 and His-233. Positions Glu-383 to Leu-461 constitute a PA domain. Residue Ser-534 is the Charge relay system of the active site.

Belongs to the peptidase S8 family. In terms of processing, probably undergoes C-terminal processing or proteolysis. Auto-processed to form active enzymes of several different molecular weights.

It localises to the secreted. It is found in the cell wall. Activity is inhibited by phenylmethylsulfonyl fluoride (PMSF), but not by EDTA. Its function is as follows. Serine protease. Involved in the production of the competence and sporulation stimulating factor CSF. Is directly involved in the processing of pro-CSF to CSF. Can also cleave pro-PhrA to PhrA, but cannot cleave pro-PhrE. Shows fibrinolytic activity in vitro. Not essential for growth or sporulation. This chain is Minor extracellular protease Vpr, found in Bacillus subtilis (strain 168).